We begin with the raw amino-acid sequence, 512 residues long: tRNA-guanine(15) transglycosylase (512 aa).

Residue Asp85 is the Nucleophile of the active site. Asp120 provides a ligand contact to substrate. Cys272, Cys274, and Cys277 together coordinate Zn(2+).

The protein belongs to the archaeosine tRNA-ribosyltransferase family. Zn(2+) is required as a cofactor.

It catalyses the reaction guanosine(15) in tRNA + 7-cyano-7-deazaguanine = 7-cyano-7-carbaguanosine(15) in tRNA + guanine. Its pathway is tRNA modification; archaeosine-tRNA biosynthesis. In terms of biological role, exchanges the guanine residue with 7-cyano-7-deazaguanine (preQ0) at position 15 in the dihydrouridine loop (D-loop) of archaeal tRNAs. The polypeptide is tRNA-guanine(15) transglycosylase (Aeropyrum pernix (strain ATCC 700893 / DSM 11879 / JCM 9820 / NBRC 100138 / K1)).